Consider the following 160-residue polypeptide: Cytochrome b6-f complex subunit 4 (160 aa).

The next 3 helical transmembrane spans lie at 36–56, 95–115, and 131–151; these read LLYV…GLSV, LLGV…PFIE, and LTFI…CVPI.

The protein belongs to the cytochrome b family. PetD subfamily. In terms of assembly, the 4 large subunits of the cytochrome b6-f complex are cytochrome b6, subunit IV (17 kDa polypeptide, petD), cytochrome f and the Rieske protein, while the 4 small subunits are petG, petL, petM and petN. The complex functions as a dimer.

Its subcellular location is the plastid. The protein localises to the chloroplast thylakoid membrane. Functionally, component of the cytochrome b6-f complex, which mediates electron transfer between photosystem II (PSII) and photosystem I (PSI), cyclic electron flow around PSI, and state transitions. This chain is Cytochrome b6-f complex subunit 4, found in Phaeodactylum tricornutum (strain CCAP 1055/1).